We begin with the raw amino-acid sequence, 763 residues long: Protein translocase subunit SecA 2 (763 aa).

ATP contacts are provided by residues Gln83, 101-105, and Asp490; that span reads GEGKT.

It belongs to the SecA family. Monomer and homodimer. Part of the essential Sec protein translocation apparatus which comprises SecA, SecYEG and auxiliary proteins SecDF. Other proteins may also be involved.

It localises to the cell membrane. It is found in the cytoplasm. The catalysed reaction is ATP + H2O + cellular proteinSide 1 = ADP + phosphate + cellular proteinSide 2.. In terms of biological role, part of the Sec protein translocase complex. Interacts with the SecYEG preprotein conducting channel. Has a central role in coupling the hydrolysis of ATP to the transfer of proteins into and across the cell membrane, serving as an ATP-driven molecular motor driving the stepwise translocation of polypeptide chains across the membrane. The polypeptide is Protein translocase subunit SecA 2 (Corynebacterium glutamicum (strain ATCC 13032 / DSM 20300 / JCM 1318 / BCRC 11384 / CCUG 27702 / LMG 3730 / NBRC 12168 / NCIMB 10025 / NRRL B-2784 / 534)).